A 129-amino-acid polypeptide reads, in one-letter code: Small ribosomal subunit protein uS11 (129 aa).

This sequence belongs to the universal ribosomal protein uS11 family. As to quaternary structure, part of the 30S ribosomal subunit. Interacts with proteins S7 and S18. Binds to IF-3.

Functionally, located on the platform of the 30S subunit, it bridges several disparate RNA helices of the 16S rRNA. Forms part of the Shine-Dalgarno cleft in the 70S ribosome. The chain is Small ribosomal subunit protein uS11 from Jannaschia sp. (strain CCS1).